The chain runs to 1150 residues: ATP-dependent helicase/deoxyribonuclease subunit B (1150 aa).

8-15 serves as a coordination point for ATP; sequence GRAGSGKS. [4Fe-4S] cluster is bound by residues Cys-789, Cys-1109, Cys-1112, and Cys-1118.

This sequence belongs to the helicase family. AddB/RexB type 1 subfamily. Heterodimer of AddA and AddB. Mg(2+) is required as a cofactor. The cofactor is [4Fe-4S] cluster.

Its function is as follows. The heterodimer acts as both an ATP-dependent DNA helicase and an ATP-dependent, dual-direction single-stranded exonuclease. Recognizes the chi site generating a DNA molecule suitable for the initiation of homologous recombination. The AddB subunit has 5' -&gt; 3' nuclease activity but not helicase activity. The polypeptide is ATP-dependent helicase/deoxyribonuclease subunit B (Clostridium kluyveri (strain NBRC 12016)).